The primary structure comprises 136 residues: uncharacterized protein (136 aa).

This is an uncharacterized protein from Leptolyngbya boryana (Plectonema boryanum).